Consider the following 1050-residue polypeptide: Probable E3 ubiquitin-protein ligase HERC3 (1050 aa).

RCC1 repeat units follow at residues 1-51, 52-101, 102-154, 156-207, 208-259, 261-311, and 313-366; these read MLCW…FLLE, DGEV…ALSD, RGQL…ALAA, GQFF…ALSL, SGAV…VLTK, GGVF…AFVP, and SGLI…IVKQ. The 100-residue stretch at 951 to 1050 folds into the HECT domain; sequence YKGDYSATHP…LDNYEGFSLA (100 aa). The Glycyl thioester intermediate role is filled by Cys1018.

In terms of processing, ubiquitinated; which promotes degradation by the proteasome.

The protein resides in the cytoplasm. It is found in the cytoplasmic vesicle. It catalyses the reaction S-ubiquitinyl-[E2 ubiquitin-conjugating enzyme]-L-cysteine + [acceptor protein]-L-lysine = [E2 ubiquitin-conjugating enzyme]-L-cysteine + N(6)-ubiquitinyl-[acceptor protein]-L-lysine.. Its pathway is protein modification; protein ubiquitination. E3 ubiquitin-protein ligase which accepts ubiquitin from an E2 ubiquitin-conjugating enzyme in the form of a thioester and then directly transfers the ubiquitin to targeted substrates. The sequence is that of Probable E3 ubiquitin-protein ligase HERC3 (HERC3) from Homo sapiens (Human).